The sequence spans 304 residues: Protease HtpX homolog (304 aa).

2 helical membrane-spanning segments follow: residues 19–39 and 41–61; these read FIVF…VSYF and LGEI…YYAY. Residue histidine 146 coordinates Zn(2+). Residue glutamate 147 is part of the active site. Histidine 150 lines the Zn(2+) pocket. The next 2 helical transmembrane spans lie at 156-176 and 192-212; these read VRLQ…GDGL and NILG…ATLL. Glutamate 221 is a binding site for Zn(2+).

The protein belongs to the peptidase M48B family. Zn(2+) is required as a cofactor.

The protein resides in the cell inner membrane. The polypeptide is Protease HtpX homolog (Dictyoglomus turgidum (strain DSM 6724 / Z-1310)).